We begin with the raw amino-acid sequence, 1616 residues long: Myosin-IIIa (1616 aa).

Positions 21–287 constitute a Protein kinase domain; it reads WEITETIGKG…VSELLQHKFI (267 aa). ATP contacts are provided by residues 27–35 and Lys-50; that span reads IGKGTYGKV. The Proton acceptor role is filled by Asp-150. Residues 338 to 1053 enclose the Myosin motor domain; it reads KDVDDLATLE…HVEQLNLMRK (716 aa). The interval 934-956 is actin-binding; sequence LMDLLSKMVVGQPHFVRCIKPNS. IQ domains lie at 1055 to 1084, 1082 to 1111, and 1346 to 1375; these read AIDKLILIQACVRAFLCSRRYQKIQEKRKE, RKESAIIIQSAARGHLVRKQRKEIVDMKNT, and EDKAAVFIQSKYRGYKRRQQLRKDKMSSFK. Residues 1401–1479 are interaction with MORN4; sequence EEINNIKKKD…RRVSSQQCLS (79 aa). 2 disordered regions span residues 1545–1567 and 1581–1616; these read LPSRSGPKEHSPSLRERRPQQEL and AESPEKEEEREPAANPYDFRRLLRKTSQRRRLVQQS. Basic and acidic residues-rich tracts occupy residues 1550–1564 and 1583–1592; these read GPKEHSPSLRERRPQ and SPEKEEEREP. The segment covering 1602-1616 has biased composition (basic residues); the sequence is LLRKTSQRRRLVQQS.

The protein in the C-terminal section; belongs to the TRAFAC class myosin-kinesin ATPase superfamily. Myosin family. This sequence in the N-terminal section; belongs to the protein kinase superfamily. STE Ser/Thr protein kinase family. As to quaternary structure, interacts with MORN4. Interacts (via C-terminus) with ESPN and ESPNL. As to expression, strongest expression in retina, retinal pigment epithelial cells, cochlea and pancreas.

Its subcellular location is the cytoplasm. It localises to the cytoskeleton. The protein resides in the cell projection. The protein localises to the filopodium tip. It is found in the stereocilium. The enzyme catalyses L-seryl-[protein] + ATP = O-phospho-L-seryl-[protein] + ADP + H(+). The catalysed reaction is L-threonyl-[protein] + ATP = O-phospho-L-threonyl-[protein] + ADP + H(+). It catalyses the reaction ATP + H2O = ADP + phosphate + H(+). Actin-dependent motor protein with a protein kinase activity, playing an essential role in hearing. Probably also plays a role in vision. Required for normal cochlear hair bundle development and hearing. Plays an important role in the early steps of cochlear hair bundle morphogenesis. Influences the number and lengths of stereocilia to be produced and limits the growth of microvilli within the forming auditory hair bundles thereby contributing to the architecture of the hair bundle, including its staircase pattern. Involved in the elongation of actin in stereocilia tips by transporting the actin regulatory factor ESPN to the plus ends of actin filaments. In Homo sapiens (Human), this protein is Myosin-IIIa (MYO3A).